The primary structure comprises 525 residues: ATP synthase subunit beta, mitochondrial (525 aa).

Residues 1 to 44 (MLKKQALSGIRRFSLATKQSFVKTSYKLPRKSWLNTAKFNTIRY) constitute a mitochondrion transit peptide. ATP is bound at residue 203–210 (GGAGVGKT).

This sequence belongs to the ATPase alpha/beta chains family. In terms of assembly, F-type ATPases have 2 components, CF(1) - the catalytic core - and CF(0) - the membrane proton channel. CF(1) has five subunits: alpha(3), beta(3), gamma(1), delta(1), epsilon(1). CF(0) has three main subunits: a, b and c.

It localises to the mitochondrion. It is found in the mitochondrion inner membrane. The enzyme catalyses ATP + H2O + 4 H(+)(in) = ADP + phosphate + 5 H(+)(out). Functionally, mitochondrial membrane ATP synthase (F(1)F(0) ATP synthase or Complex V) produces ATP from ADP in the presence of a proton gradient across the membrane which is generated by electron transport complexes of the respiratory chain. F-type ATPases consist of two structural domains, F(1) - containing the extramembraneous catalytic core, and F(0) - containing the membrane proton channel, linked together by a central stalk and a peripheral stalk. During catalysis, ATP synthesis in the catalytic domain of F(1) is coupled via a rotary mechanism of the central stalk subunits to proton translocation. Subunits alpha and beta form the catalytic core in F(1). Rotation of the central stalk against the surrounding alpha(3)beta(3) subunits leads to hydrolysis of ATP in three separate catalytic sites on the beta subunits. In Schizosaccharomyces pombe (strain 972 / ATCC 24843) (Fission yeast), this protein is ATP synthase subunit beta, mitochondrial (atp2).